The following is a 408-amino-acid chain: UPF0761 membrane protein NMCC_0461 (408 aa).

The next 6 membrane-spanning stretches (helical) occupy residues 43-63, 100-120, 139-159, 176-196, 210-230, and 248-268; these read LLAL…FPVF, LTAI…RTID, FLVY…GISF, WSGA…LWGL, AFVG…LFTW, and VPFF…GAVL.

The protein belongs to the UPF0761 family.

The protein localises to the cell inner membrane. The chain is UPF0761 membrane protein NMCC_0461 from Neisseria meningitidis serogroup C (strain 053442).